The sequence spans 106 residues: Iron-sulfur cluster assembly protein CyaY (106 aa).

Belongs to the frataxin family. In terms of assembly, interacts with IscS. Certain pairs of proteins can bind simultaneously to IscS; IscS-IscU-CyaY complexes can be isolated in vitro, but (IscS-TusA-CyaY) complexes cannot.

Functionally, involved in iron-sulfur (Fe-S) cluster assembly. May act as a regulator of Fe-S biogenesis. The polypeptide is Iron-sulfur cluster assembly protein CyaY (Escherichia coli O157:H7).